Here is a 312-residue protein sequence, read N- to C-terminus: Glyoxylate/hydroxypyruvate reductase A (312 aa).

Arg-227 is a catalytic residue. The active-site Proton donor is the His-275.

This sequence belongs to the D-isomer specific 2-hydroxyacid dehydrogenase family. GhrA subfamily.

Its subcellular location is the cytoplasm. It carries out the reaction glycolate + NADP(+) = glyoxylate + NADPH + H(+). The catalysed reaction is (R)-glycerate + NAD(+) = 3-hydroxypyruvate + NADH + H(+). It catalyses the reaction (R)-glycerate + NADP(+) = 3-hydroxypyruvate + NADPH + H(+). Functionally, catalyzes the NADPH-dependent reduction of glyoxylate and hydroxypyruvate into glycolate and glycerate, respectively. This chain is Glyoxylate/hydroxypyruvate reductase A, found in Escherichia coli (strain 55989 / EAEC).